The chain runs to 103 residues: Large ribosomal subunit protein eL14 (103 aa).

This sequence belongs to the eukaryotic ribosomal protein eL14 family.

In Pyrobaculum neutrophilum (strain DSM 2338 / JCM 9278 / NBRC 100436 / V24Sta) (Thermoproteus neutrophilus), this protein is Large ribosomal subunit protein eL14.